We begin with the raw amino-acid sequence, 391 residues long: Putative gustatory receptor 36b (391 aa).

Residues 1-4 (MVDW) are Cytoplasmic-facing. The chain crosses the membrane as a helical span at residues 5–25 (VVLLLKAVHIYCYLIGLSNFE). Topologically, residues 26-39 (FDCRTGRVFKSRRC) are extracellular. The chain crosses the membrane as a helical span at residues 40 to 60 (TIYAFMANIFILITIIYNFTA). The Cytoplasmic segment spans residues 61-74 (HGDTNLLFQSANKL). A helical transmembrane segment spans residues 75 to 95 (HEYVIIIMSGLKIVAGLITVL). Residues 96 to 127 (NRWLQRGQMMQLVKDVIRLYMINPQLKSMIRW) lie on the Extracellular side of the membrane. A helical transmembrane segment spans residues 128–148 (GILLKAFISFAIELLQVTLSV). Residues 149-165 (DALDRQGTAEMMGLLVK) lie on the Cytoplasmic side of the membrane. Residues 166–186 (LCVSFIMNLAISQHFLVILLI) form a helical membrane-spanning segment. At 187 to 284 (RAQYRIMNAK…YKYGPHNLKL (98 aa)) the chain is on the extracellular side. The helical transmembrane segment at 285–305 (SAKTSIIVCILITLFYLDALV) threads the bilayer. The Cytoplasmic portion of the chain corresponds to 306-363 (NCNNMLRVLDHHKDFLGLLEERTVFASSLDIRLEESFESLQLQLARNPLKINVMGMFP). Residues 364 to 384 (ITRGSTAAMCASVIVNSIFLI) form a helical membrane-spanning segment. Over 385 to 391 (QFDMEFF) the chain is Extracellular.

It belongs to the insect chemoreceptor superfamily. Gustatory receptor (GR) family. Gr22e subfamily. In terms of tissue distribution, expressed in neurons of the terminal external chemosensory organ of larvae.

It is found in the cell membrane. In terms of biological role, probable gustatory receptor which mediates acceptance or avoidance behavior, depending on its substrates. The protein is Putative gustatory receptor 36b (Gr36b) of Drosophila melanogaster (Fruit fly).